The sequence spans 332 residues: L-lactate dehydrogenase A chain (332 aa).

Residues 29 to 57 (GAVG…VEDK) and R99 each bind NAD(+). Substrate is bound by residues R106, N138, and R169. N138 is an NAD(+) binding site. The active-site Proton acceptor is the H193. T248 is a binding site for substrate.

Belongs to the LDH/MDH superfamily. LDH family. As to quaternary structure, homotetramer.

Its subcellular location is the cytoplasm. It catalyses the reaction (S)-lactate + NAD(+) = pyruvate + NADH + H(+). Its pathway is fermentation; pyruvate fermentation to lactate; (S)-lactate from pyruvate: step 1/1. Interconverts simultaneously and stereospecifically pyruvate and lactate with concomitant interconversion of NADH and NAD(+). The protein is L-lactate dehydrogenase A chain (LDHA) of Caiman crocodilus apaporiensis (Rio Apaporis caiman).